Reading from the N-terminus, the 194-residue chain is dCTP deaminase (194 aa).

DCTP contacts are provided by residues 110 to 115 (RSSLAR), aspartate 128, 136 to 138 (VLE), tyrosine 171, lysine 178, and glutamine 182. Residue glutamate 138 is the Proton donor/acceptor of the active site.

Belongs to the dCTP deaminase family. As to quaternary structure, homotrimer.

The catalysed reaction is dCTP + H2O + H(+) = dUTP + NH4(+). Its pathway is pyrimidine metabolism; dUMP biosynthesis; dUMP from dCTP (dUTP route): step 1/2. Functionally, catalyzes the deamination of dCTP to dUTP. The protein is dCTP deaminase of Pseudoalteromonas translucida (strain TAC 125).